The following is a 1523-amino-acid chain: WD repeat-containing protein 62 (1523 aa).

N-acetylalanine is present on alanine 2. A Phosphoserine modification is found at serine 33. Residue threonine 46 is modified to Phosphothreonine. WD repeat units lie at residues 109–150, 153–194, 196–234, 291–330, 357–396, 411–450, 490–529, 532–574, 578–618, 626–665, 671–713, and 714–752; these read TTRK…QVAE, GHKY…VVAS, KVSCRVIALSFSEDSSYFVTVGNRHVRFWFLEASTEAKV, INLKVSLSSCLCVSDELIFCGCTDGIVRIFQAHSLLYLTN, AVYPDTVALTFDPVHQWLSCVYKDHSIYIWDVKDIDEVSK, EVYPEFEDQRACLPSGTFLTCSSDNTIRFWNLDSASDTRW, DMKAGVRVMQVSPDGQHLASGDRSGNLRIHELHFMDELIK, AHDA…NLEQ, DHSS…DGLH, AEKTTLYDMDIDITQKYVAVACQDRNVRVYNTVSGKQKKC, GDEG…KMFG, and HSEIVTGMKFTYDCRHLITVSGDSCVFIWHLGPEITTCM. At serine 501 the chain carries Phosphoserine. A disordered region spans residues 762-824; sequence QEQQQQPKDQ…PSKDSLDPDP (63 aa). A compositionally biased stretch (polar residues) spans 776–790; sequence PPSQETYASTPSEIR. Residues 797-809 show a composition bias toward acidic residues; sequence QTEDEMEEECEPE. The stretch at 803–846 is one WD 13 repeat; sequence EEECEPEELLKTPSKDSLDPDPRCLLTNGKLPLWAKRLLGDDDV. Residues 810-824 are compositionally biased toward basic and acidic residues; it reads ELLKTPSKDSLDPDP. A phosphoserine mark is found at serine 966 and serine 972. The interval 1000–1072 is disordered; the sequence is VSSVSSKDQS…GLGNGSLPQT (73 aa). Phosphothreonine is present on threonine 1072. 3 positions are modified to phosphoserine: serine 1117, serine 1143, and serine 1169. Positions 1143-1258 are disordered; it reads SPEAQPVGQG…SLHKPLSPGQ (116 aa). Polar residues-rich tracts occupy residues 1167 to 1177 and 1199 to 1213; these read YMSSDGTNVLS and TSVLTTGREQSISAP. The segment covering 1214-1225 has biased composition (low complexity); the sequence is SSCSYLESTTSS. Polar residues predominate over residues 1226–1235; the sequence is HAKTTRSISL. At serine 1234 the chain carries Phosphoserine.

In terms of assembly, can form homodimers (via C-terminus). Interacts (via C-terminus) with MAPKBP1 (via C-terminus). Interacts with CDK5RAP2, CEP152, CEP63 and KIAA0753. CEP63, CDK5RAP2, CEP152, WDR62 are proposed to form a stepwise assembled complex at the centrosome forming a ring near parental centrioles. Prominent in neural crest lineages from 9.5 dpc to 11.5 dpc. Also expressed in the ventricular and subventricular zones during the period of cerebral cortical neurogenesis (11.5-16.5 dpc), with expression decreasing in intensity by 17.5 dpc. In the cerebellum, it is strongly expressed in precursors of granule neurons at late embryonic and early postnatal stages; by postnatal day 9 (P9). Present in fetal brain, enriched within the ventricular and subventricular zone (at protein level).

Its subcellular location is the nucleus. It is found in the cytoplasm. The protein resides in the cytoskeleton. The protein localises to the spindle pole. It localises to the microtubule organizing center. Its subcellular location is the centrosome. It is found in the centriole. Functionally, required for cerebral cortical development. Plays a role in neuronal proliferation and migration. Plays a role in mother-centriole-dependent centriole duplication; the function seems also to involve CEP152, CDK5RAP2 and CEP63 through a stepwise assembled complex at the centrosome that recruits CDK2 required for centriole duplication. In Mus musculus (Mouse), this protein is WD repeat-containing protein 62 (Wdr62).